Consider the following 924-residue polypeptide: Protein translocase subunit SecA (924 aa).

ATP-binding positions include Q87, 105–109 (GEGKT), and D515. 4 residues coordinate Zn(2+): C908, C910, C919, and H920.

The protein belongs to the SecA family. Monomer and homodimer. Part of the essential Sec protein translocation apparatus which comprises SecA, SecYEG and auxiliary proteins SecDF-YajC and YidC. Zn(2+) serves as cofactor.

Its subcellular location is the cell inner membrane. It is found in the cytoplasm. It catalyses the reaction ATP + H2O + cellular proteinSide 1 = ADP + phosphate + cellular proteinSide 2.. Part of the Sec protein translocase complex. Interacts with the SecYEG preprotein conducting channel. Has a central role in coupling the hydrolysis of ATP to the transfer of proteins into and across the cell membrane, serving both as a receptor for the preprotein-SecB complex and as an ATP-driven molecular motor driving the stepwise translocation of polypeptide chains across the membrane. This is Protein translocase subunit SecA from Cupriavidus pinatubonensis (strain JMP 134 / LMG 1197) (Cupriavidus necator (strain JMP 134)).